A 268-amino-acid polypeptide reads, in one-letter code: 4-hydroxy-tetrahydrodipicolinate reductase (268 aa).

Residues 8–13 (GACGKM), Asp-34, 95–97 (GTT), and 121–124 (APNF) each bind NAD(+). The active-site Proton donor/acceptor is the His-151. His-152 is a (S)-2,3,4,5-tetrahydrodipicolinate binding site. Lys-155 functions as the Proton donor in the catalytic mechanism. Residue 161–162 (GT) coordinates (S)-2,3,4,5-tetrahydrodipicolinate.

Belongs to the DapB family.

It localises to the cytoplasm. It catalyses the reaction (S)-2,3,4,5-tetrahydrodipicolinate + NAD(+) + H2O = (2S,4S)-4-hydroxy-2,3,4,5-tetrahydrodipicolinate + NADH + H(+). The enzyme catalyses (S)-2,3,4,5-tetrahydrodipicolinate + NADP(+) + H2O = (2S,4S)-4-hydroxy-2,3,4,5-tetrahydrodipicolinate + NADPH + H(+). Its pathway is amino-acid biosynthesis; L-lysine biosynthesis via DAP pathway; (S)-tetrahydrodipicolinate from L-aspartate: step 4/4. In terms of biological role, catalyzes the conversion of 4-hydroxy-tetrahydrodipicolinate (HTPA) to tetrahydrodipicolinate. The sequence is that of 4-hydroxy-tetrahydrodipicolinate reductase from Dictyoglomus turgidum (strain DSM 6724 / Z-1310).